A 401-amino-acid polypeptide reads, in one-letter code: Stearoyl-[acyl-carrier-protein] 9-desaturase 3, chloroplastic (401 aa).

Positions 1 to 31 (MSMALLLTSPAMKQKPAVITSPRRGSSPSRR) are disordered. Residues 1–35 (MSMALLLTSPAMKQKPAVITSPRRGSSPSRRLRVS) constitute a chloroplast transit peptide. Glu140, Glu178, His181, Glu231, Glu264, and His267 together coordinate Fe cation.

This sequence belongs to the fatty acid desaturase type 2 family. As to quaternary structure, homodimer. Fe(2+) serves as cofactor. In terms of tissue distribution, ubiquitously expressed with a preference in leaves, flowers and stems.

The protein resides in the plastid. The protein localises to the chloroplast. It carries out the reaction octadecanoyl-[ACP] + 2 reduced [2Fe-2S]-[ferredoxin] + O2 + 2 H(+) = (9Z)-octadecenoyl-[ACP] + 2 oxidized [2Fe-2S]-[ferredoxin] + 2 H2O. It functions in the pathway lipid metabolism; fatty acid metabolism. Functionally, converts stearoyl-ACP to oleoyl-ACP by introduction of a cis double bond between carbons 9 and 10 of the acyl chain. Also able to convert palmitoyl-ACP to palmitoleoyl-ACP at the C9 position. Exhibits delta-9 palmitoyl-[acyl-carrier-protein] desaturase (PAD) activity. Involved in omega-7 monounsaturated fatty acid biosynthesis, especially in the endosperm oil. This is Stearoyl-[acyl-carrier-protein] 9-desaturase 3, chloroplastic (S-ACP-DES3) from Arabidopsis thaliana (Mouse-ear cress).